Reading from the N-terminus, the 61-residue chain is Large ribosomal subunit protein bL32 (61 aa).

The segment covering 1 to 16 (MAVPKRKTSPSKRGMR) has biased composition (basic residues). Positions 1 to 41 (MAVPKRKTSPSKRGMRRSADALKASTYVEDKNSGELRRPHH) are disordered. Basic and acidic residues predominate over residues 28 to 41 (VEDKNSGELRRPHH).

This sequence belongs to the bacterial ribosomal protein bL32 family.

The polypeptide is Large ribosomal subunit protein bL32 (Rhizobium rhizogenes (strain K84 / ATCC BAA-868) (Agrobacterium radiobacter)).